Reading from the N-terminus, the 178-residue chain is UPF0098 protein PYRAB11530 (178 aa).

The N-terminal stretch at 1–22 (MRYLVPLLVFMVLGMGCLGGGG) is a signal peptide.

The protein belongs to the UPF0098 family.

The polypeptide is UPF0098 protein PYRAB11530 (Pyrococcus abyssi (strain GE5 / Orsay)).